We begin with the raw amino-acid sequence, 73 residues long: Toxin Td3 (73 aa).

A signal peptide spans isoleucine 1 to cysteine 7. In terms of domain architecture, LCN-type CS-alpha/beta spans lysine 8 to glycine 70. 4 disulfides stabilise this stretch: cysteine 18/cysteine 69, cysteine 22/cysteine 44, cysteine 30/cysteine 50, and cysteine 34/cysteine 52. A Lysine amide modification is found at lysine 71.

It belongs to the long (4 C-C) scorpion toxin superfamily. Sodium channel inhibitor family. Beta subfamily. As to expression, expressed by the venom gland.

It is found in the secreted. Beta toxins bind voltage-independently at site-4 of sodium channels (Nav) and shift the voltage of activation toward more negative potentials thereby affecting sodium channel activation and promoting spontaneous and repetitive firing. In Tityus discrepans (Venezuelan scorpion), this protein is Toxin Td3.